Here is a 316-residue protein sequence, read N- to C-terminus: MPITIGRGFLKSEMFSQSAISQRSFFTLLWEKIKDFFCDTQRSTADQYIKELCDVASPPDAQRLFDLFCKLYELSSPSCRGNFHFQHYKDAECQYTNLCIKDGEDIPLCIMIRQDHYYYEIMNRTVLCVDTQSAHLKRYSDINIKASTYVCEPLCCLFPERLQLSLSGGITFSVDLKNIEETLIAMAEKGNLCDWKEQERKAAISSRINLGIAQAGVTAIDDAIKNKIAAKVIENTNLKNAAFEPNYAQSSVTQIVYSCLFKNEILMNMLEESSSHGLLCLNELTEYVALQVHNSLFSEDLSSLVETTKNEAHHQS.

This sequence belongs to the Sif family.

The protein localises to the secreted. Its subcellular location is the host cytoplasm. Its function is as follows. Effector proteins function to alter host cell physiology and promote bacterial survival in host tissues. This chain is Secreted effector protein SifB (sifB), found in Salmonella typhimurium (strain LT2 / SGSC1412 / ATCC 700720).